The chain runs to 218 residues: Adenylate kinase (218 aa).

Position 10 to 15 (10 to 15) interacts with ATP; sequence GAGKGT. Positions 30–59 are NMP; sequence STGDMLRAAIAKGTPLGLSAQKIMESGGLV. Residues threonine 31, arginine 36, 57-59, 85-88, and glutamine 92 contribute to the AMP site; these read GLV and GFPR. Positions 122–159 are LID; sequence GRRIHQPSGRVYHVVNQPPKNPGVDDITGEPLIQRDDD. ATP is bound by residues arginine 123 and 132-133; that span reads VY. AMP-binding residues include arginine 156 and arginine 167. Glycine 203 lines the ATP pocket.

The protein belongs to the adenylate kinase family. As to quaternary structure, monomer.

The protein localises to the cytoplasm. It catalyses the reaction AMP + ATP = 2 ADP. It participates in purine metabolism; AMP biosynthesis via salvage pathway; AMP from ADP: step 1/1. In terms of biological role, catalyzes the reversible transfer of the terminal phosphate group between ATP and AMP. Plays an important role in cellular energy homeostasis and in adenine nucleotide metabolism. The sequence is that of Adenylate kinase from Legionella pneumophila (strain Lens).